Reading from the N-terminus, the 218-residue chain is Protein-L-isoaspartate O-methyltransferase 1 (218 aa).

Ser-69 is an active-site residue.

This sequence belongs to the methyltransferase superfamily. L-isoaspartyl/D-aspartyl protein methyltransferase family.

Its subcellular location is the cytoplasm. The catalysed reaction is [protein]-L-isoaspartate + S-adenosyl-L-methionine = [protein]-L-isoaspartate alpha-methyl ester + S-adenosyl-L-homocysteine. Functionally, catalyzes the methyl esterification of L-isoaspartyl residues in peptides and proteins that result from spontaneous decomposition of normal L-aspartyl and L-asparaginyl residues. It plays a role in the repair and/or degradation of damaged proteins. This is Protein-L-isoaspartate O-methyltransferase 1 from Marinobacter nauticus (strain ATCC 700491 / DSM 11845 / VT8) (Marinobacter aquaeolei).